A 78-amino-acid polypeptide reads, in one-letter code: Large ribosomal subunit protein bL28 (78 aa).

The interval 1–20 is disordered; that stretch reads MSRVCQVTSKRPAVGNNRSH.

The protein belongs to the bacterial ribosomal protein bL28 family.

The sequence is that of Large ribosomal subunit protein bL28 from Haemophilus ducreyi (strain 35000HP / ATCC 700724).